The following is a 192-amino-acid chain: MAQPNPLTTPPPGADTQVVPGHVEHTEAHSGAFPPFETSGFLAQLIWLALAFGLLYYLMDKIALPRIQSILHARAERLRADLDQAQAMKAEADAAGVAFETALRDAQGKARDIAQTTRNELAAEAETKRKALEDELNAKLSASEATIRTRTEAAMGNVRTIAGEAASAIVERLTGQAPDRTSLDRALDATAH.

The chain crosses the membrane as a helical span at residues 39-59 (SGFLAQLIWLALAFGLLYYLM).

Belongs to the ATPase B chain family. F-type ATPases have 2 components, F(1) - the catalytic core - and F(0) - the membrane proton channel. F(1) has five subunits: alpha(3), beta(3), gamma(1), delta(1), epsilon(1). F(0) has three main subunits: a(1), b(2) and c(10-14). The alpha and beta chains form an alternating ring which encloses part of the gamma chain. F(1) is attached to F(0) by a central stalk formed by the gamma and epsilon chains, while a peripheral stalk is formed by the delta and b chains.

It is found in the cell inner membrane. Its function is as follows. F(1)F(0) ATP synthase produces ATP from ADP in the presence of a proton or sodium gradient. F-type ATPases consist of two structural domains, F(1) containing the extramembraneous catalytic core and F(0) containing the membrane proton channel, linked together by a central stalk and a peripheral stalk. During catalysis, ATP synthesis in the catalytic domain of F(1) is coupled via a rotary mechanism of the central stalk subunits to proton translocation. Functionally, component of the F(0) channel, it forms part of the peripheral stalk, linking F(1) to F(0). The b'-subunit is a diverged and duplicated form of b found in plants and photosynthetic bacteria. The chain is ATP synthase subunit b 2 (atpF2) from Methylobacterium radiotolerans (strain ATCC 27329 / DSM 1819 / JCM 2831 / NBRC 15690 / NCIMB 10815 / 0-1).